Here is a 296-residue protein sequence, read N- to C-terminus: GTPase Era (296 aa).

The Era-type G domain maps to 3–170 (KSGFVTIVGR…KELMFKYIPE (168 aa)). The segment at 11-18 (GRPNVGKS) is G1. A GTP-binding site is contributed by 11-18 (GRPNVGKS). The segment at 37–41 (QTTRN) is G2. A G3 region spans residues 58 to 61 (DTPG). Residues 58-62 (DTPGI) and 120-123 (NKID) each bind GTP. The G4 stretch occupies residues 120–123 (NKID). The G5 stretch occupies residues 149-151 (ISA). The region spanning 201 to 278 (LSEEVPHGIA…YIRLWVKVKE (78 aa)) is the KH type-2 domain.

The protein belongs to the TRAFAC class TrmE-Era-EngA-EngB-Septin-like GTPase superfamily. Era GTPase family. As to quaternary structure, monomer.

It is found in the cytoplasm. It localises to the cell membrane. Its function is as follows. An essential GTPase that binds both GDP and GTP, with rapid nucleotide exchange. Plays a role in 16S rRNA processing and 30S ribosomal subunit biogenesis and possibly also in cell cycle regulation and energy metabolism. In Clostridium botulinum (strain Loch Maree / Type A3), this protein is GTPase Era.